Reading from the N-terminus, the 445-residue chain is Phosphoglucosamine mutase (445 aa).

The active-site Phosphoserine intermediate is Ser99. Residues Ser99, Asp242, Asp244, and Asp246 each contribute to the Mg(2+) site. At Ser99 the chain carries Phosphoserine.

Belongs to the phosphohexose mutase family. The cofactor is Mg(2+). Activated by phosphorylation.

The enzyme catalyses alpha-D-glucosamine 1-phosphate = D-glucosamine 6-phosphate. Catalyzes the conversion of glucosamine-6-phosphate to glucosamine-1-phosphate. In Campylobacter lari (strain RM2100 / D67 / ATCC BAA-1060), this protein is Phosphoglucosamine mutase.